The chain runs to 371 residues: MAEPVNNLIDLLLNDNIKGLKPYESARRLFSGAGNKQQVWLNANESPFANDFTIDAERFNRYPDCQPPAVIDAYAAYAGVQPEQLLVSRGADEGIELLIRAFCTPGKDSVLICPPTYGMYAISAETCDVGIERAGLNDDFSLNVDAIKAFKGKVNLVFICSPNNPTGTSVDKNQLLEVVEHFADSAIVVIDEAYIEFDKDNSWAAELTHYPNIAILRTLSKAFALAGLRCGFTLAQAPVIQALMKVIAPYPIPEPVAQIAAQALSSEGLVTLEQQVAVINQEKALLKSALAEIADVELVGDDKANFILFRTPQKSALMSHLVASGILIRDQSKQINLDNCLRITVGSPEQNKQLLSEISRFFTLQTSTQEA.

Position 221 is an N6-(pyridoxal phosphate)lysine (lysine 221).

It belongs to the class-II pyridoxal-phosphate-dependent aminotransferase family. Histidinol-phosphate aminotransferase subfamily. In terms of assembly, homodimer. Requires pyridoxal 5'-phosphate as cofactor.

It carries out the reaction L-histidinol phosphate + 2-oxoglutarate = 3-(imidazol-4-yl)-2-oxopropyl phosphate + L-glutamate. It participates in amino-acid biosynthesis; L-histidine biosynthesis; L-histidine from 5-phospho-alpha-D-ribose 1-diphosphate: step 7/9. The protein is Histidinol-phosphate aminotransferase of Pseudoalteromonas atlantica (strain T6c / ATCC BAA-1087).